The chain runs to 235 residues: Ubiquinone/menaquinone biosynthesis C-methyltransferase UbiE (235 aa).

S-adenosyl-L-methionine-binding residues include threonine 59, aspartate 84, and serine 123.

This sequence belongs to the class I-like SAM-binding methyltransferase superfamily. MenG/UbiE family.

The enzyme catalyses a 2-demethylmenaquinol + S-adenosyl-L-methionine = a menaquinol + S-adenosyl-L-homocysteine + H(+). It catalyses the reaction a 2-methoxy-6-(all-trans-polyprenyl)benzene-1,4-diol + S-adenosyl-L-methionine = a 5-methoxy-2-methyl-3-(all-trans-polyprenyl)benzene-1,4-diol + S-adenosyl-L-homocysteine + H(+). The protein operates within quinol/quinone metabolism; menaquinone biosynthesis; menaquinol from 1,4-dihydroxy-2-naphthoate: step 2/2. Its pathway is cofactor biosynthesis; ubiquinone biosynthesis. In terms of biological role, methyltransferase required for the conversion of demethylmenaquinol (DMKH2) to menaquinol (MKH2) and the conversion of 2-polyprenyl-6-methoxy-1,4-benzoquinol (DDMQH2) to 2-polyprenyl-3-methyl-6-methoxy-1,4-benzoquinol (DMQH2). This is Ubiquinone/menaquinone biosynthesis C-methyltransferase UbiE from Campylobacter jejuni subsp. jejuni serotype O:23/36 (strain 81-176).